Reading from the N-terminus, the 203-residue chain is MDKLNIRDILRAQDVTRWQIVRTKKQSVAEHTFAVQAVLMRLVPLLISTYTAPMKVGFEERLLCECIMGAFWHDIPEVITGDIASPVKRLIRDGGDITPLDDLEKKVDPAFIKCYTAAKPLTLAIIKCADLMEMVYHLNEYGDQRANSHSWRVQHGINNAFHEHIHNCSENFPAFKWDVAHGLLIEMLDPSQETDIDSIVNGI.

Arg17 lines the dATP pocket. Residues His31, His73, Asp74, Glu77, Asp82, and Asp130 each contribute to the Co(2+) site.

Belongs to the Caudovirales dATP triphosphohydrolase family. Requires Co(2+) as cofactor.

It carries out the reaction dATP + H2O = 2'-deoxyadenosine + triphosphate + H(+). The enzyme catalyses dADP + H2O = 2'-deoxyadenosine + diphosphate. It catalyses the reaction dAMP + H2O = 2'-deoxyadenosine + phosphate. Catalyzes the hydrolysis of dATP, dADP and dAMP into dA. This step is essential for Z-genome synthesis (containing aminoadenine instead of adenine). Specifically removes dATP and its precursor dADP from the nucleotide pool of the host, preventing the incorporation of A into the phage genome and favoring the integration of the Z-base into the viral genome. The sequence is that of dATP triphosphohydrolase (datZ) from Acinetobacter phage SH-Ab 15497.